The primary structure comprises 199 residues: Glycerol-3-phosphate acyltransferase (199 aa).

5 helical membrane-spanning segments follow: residues 5 to 25 (AFLV…VALV), 51 to 71 (KLGV…VLCA), 79 to 99 (VFLS…VFLY), 112 to 132 (VFLG…VAVI), and 153 to 173 (CAWL…GLVI).

The protein belongs to the PlsY family. As to quaternary structure, probably interacts with PlsX.

Its subcellular location is the cell inner membrane. The enzyme catalyses an acyl phosphate + sn-glycerol 3-phosphate = a 1-acyl-sn-glycero-3-phosphate + phosphate. The protein operates within lipid metabolism; phospholipid metabolism. Catalyzes the transfer of an acyl group from acyl-phosphate (acyl-PO(4)) to glycerol-3-phosphate (G3P) to form lysophosphatidic acid (LPA). This enzyme utilizes acyl-phosphate as fatty acyl donor, but not acyl-CoA or acyl-ACP. This Solidesulfovibrio magneticus (strain ATCC 700980 / DSM 13731 / RS-1) (Desulfovibrio magneticus) protein is Glycerol-3-phosphate acyltransferase.